Here is a 450-residue protein sequence, read N- to C-terminus: MLVTAYLAFVVLLASCLGLELSRCRAKPSGRACSNPSFLRFQLDFYQVYFLALAADWLQAPYLYKLYQHYHFLEAQIAILYVCGLASTVLFGLVASSLVDWLGRKKSCVLFSLTYSLCCLTKLSRDYFVLLVGRALGGLSTALLFSAFEAWYIHEHLERHDFPTEWIPATFARAAFWNHVLAVAAGVAAEAVACWMGLGPVAPFVAAIPLLALAGALALHNWGENYDRQRAFSRTCAGGLRCLLSDRRVLLLGTIQALFESVIFIFVFLWTPVLDPHGAPLGIIFSSFMAASLLGSSLYRIATSKRYHLQPMHLLSLAVLIVVFSLFMLTFSTSPGQESPVESFIAFLLIELACGLYFPSMSFLRRKVIPETEQAGVLNWFRVPLHLLACLGLLVLHDSDRKTGTRNMFSICSAVMVMALLAVVGLFTVVRHDAELRVPSPTGEPYTPEL.

12 consecutive transmembrane segments (helical) span residues Met-1–Leu-21, Leu-43–Leu-63, Ile-79–Val-99, Phe-128–Phe-148, Phe-176–Met-196, Leu-198–Ala-218, Val-249–Leu-269, Gly-278–Leu-298, Pro-311–Phe-331, Phe-344–Leu-364, Gly-376–Leu-396, and Phe-409–Val-429.

Belongs to the major facilitator superfamily.

It localises to the cell membrane. Mediates high-affinity intracellular uptake of the rare oligo-element molybdenum. The chain is Molybdate-anion transporter (MFSD5) from Bos taurus (Bovine).